Consider the following 573-residue polypeptide: Isocitrate dehydrogenase kinase/phosphatase (573 aa).

Residues Ala-318 to Met-324 and Lys-339 contribute to the ATP site. Residue Asp-374 is part of the active site.

The protein belongs to the AceK family.

Its subcellular location is the cytoplasm. The enzyme catalyses L-seryl-[isocitrate dehydrogenase] + ATP = O-phospho-L-seryl-[isocitrate dehydrogenase] + ADP + H(+). In terms of biological role, bifunctional enzyme which can phosphorylate or dephosphorylate isocitrate dehydrogenase (IDH) on a specific serine residue. This is a regulatory mechanism which enables bacteria to bypass the Krebs cycle via the glyoxylate shunt in response to the source of carbon. When bacteria are grown on glucose, IDH is fully active and unphosphorylated, but when grown on acetate or ethanol, the activity of IDH declines drastically concomitant with its phosphorylation. The polypeptide is Isocitrate dehydrogenase kinase/phosphatase (Stutzerimonas stutzeri (strain A1501) (Pseudomonas stutzeri)).